Consider the following 132-residue polypeptide: NADH-quinone oxidoreductase subunit A (132 aa).

3 consecutive transmembrane segments (helical) span residues 7–27, 62–82, and 91–111; these read YWVL…MIGV, FYLI…LYAW, and WTGY…LAYL.

This sequence belongs to the complex I subunit 3 family. NDH-1 is composed of 14 different subunits. Subunits NuoA, H, J, K, L, M, N constitute the membrane sector of the complex.

The protein localises to the cell inner membrane. It carries out the reaction a quinone + NADH + 5 H(+)(in) = a quinol + NAD(+) + 4 H(+)(out). Its function is as follows. NDH-1 shuttles electrons from NADH, via FMN and iron-sulfur (Fe-S) centers, to quinones in the respiratory chain. The immediate electron acceptor for the enzyme in this species is believed to be ubiquinone. Couples the redox reaction to proton translocation (for every two electrons transferred, four hydrogen ions are translocated across the cytoplasmic membrane), and thus conserves the redox energy in a proton gradient. This is NADH-quinone oxidoreductase subunit A from Acidiphilium cryptum (strain JF-5).